The primary structure comprises 409 residues: Na(+)-translocating NADH-quinone reductase subunit F (409 aa).

Residues 5 to 25 form a helical membrane-spanning segment; it reads FIFGIIAFTALVLVLAVIILF. The region spanning 34–128 is the 2Fe-2S ferredoxin-type domain; that stretch reads GDITISINDD…SMDVELPEEI (95 aa). Residues C71, C77, C80, and C112 each contribute to the [2Fe-2S] cluster site. The region spanning 131–271 is the FAD-binding FR-type domain; the sequence is VKKWECTVIS…SGPFGEFFAK (141 aa).

It belongs to the NqrF family. In terms of assembly, composed of six subunits; NqrA, NqrB, NqrC, NqrD, NqrE and NqrF. [2Fe-2S] cluster serves as cofactor. The cofactor is FAD.

It is found in the cell inner membrane. It catalyses the reaction a ubiquinone + n Na(+)(in) + NADH + H(+) = a ubiquinol + n Na(+)(out) + NAD(+). NQR complex catalyzes the reduction of ubiquinone-1 to ubiquinol by two successive reactions, coupled with the transport of Na(+) ions from the cytoplasm to the periplasm. The first step is catalyzed by NqrF, which accepts electrons from NADH and reduces ubiquinone-1 to ubisemiquinone by a one-electron transfer pathway. The protein is Na(+)-translocating NADH-quinone reductase subunit F of Haemophilus ducreyi (strain 35000HP / ATCC 700724).